A 509-amino-acid chain; its full sequence is 2,3-bisphosphoglycerate-independent phosphoglycerate mutase (509 aa).

Residues Asp-13 and Ser-63 each coordinate Mn(2+). Catalysis depends on Ser-63, which acts as the Phosphoserine intermediate. Substrate is bound by residues His-124, 154–155 (RD), Arg-186, Arg-192, 261–264 (RPDR), and Lys-335. 5 residues coordinate Mn(2+): Asp-400, His-404, Asp-441, His-442, and His-459.

It belongs to the BPG-independent phosphoglycerate mutase family. Monomer. It depends on Mn(2+) as a cofactor.

The catalysed reaction is (2R)-2-phosphoglycerate = (2R)-3-phosphoglycerate. It functions in the pathway carbohydrate degradation; glycolysis; pyruvate from D-glyceraldehyde 3-phosphate: step 3/5. In terms of biological role, catalyzes the interconversion of 2-phosphoglycerate and 3-phosphoglycerate. This chain is 2,3-bisphosphoglycerate-independent phosphoglycerate mutase, found in Desulforudis audaxviator (strain MP104C).